The sequence spans 360 residues: MPKFKQRRRKLKAKAERLFKKKEASHFQSKLITPPPPPPSPERVGISSIDISQSRSWLTSSWNFNFPNIRDAIKLWTNRVWSIYSWCQNCITQSLEVLKDTIFPSRICHRELYSVKQQFCILESKLCKLQEALKTISESSSCPSCGQTCHMSGKLTNVPACVLITPGDSKAVLPPTLPQPASHFPPPPPPPPLPPPPPPLAPVLLRKPSLAKALQAGPLKKDGPMQITVKDLLTVKLKKTQSLDEKRKLIPSPKARNPLVTVSDLQHVTLKPNSKVLSTRVTNVLITPGKSQMDLRKLLRKVDVERSPGGTPLTNKENMETGTGLTPVMTQALRRKFQLAHPRSPTPTLPLSTSSFDEQN.

2 disordered regions span residues Lys-20–Arg-43 and Pro-174–Ala-201. Phosphothreonine is present on Thr-33. Phosphoserine is present on Ser-40. The segment covering Pro-175–Ala-201 has biased composition (pro residues). The Phosphodegron motif lies at Leu-285–Ser-291. At Thr-287 the chain carries Phosphothreonine. The residue at position 291 (Ser-291) is a Phosphoserine. Positions Arg-296–Val-304 match the D-box motif. The KEN box signature appears at Lys-316 to Asn-318. The Phosphodegron motif lies at Leu-325–Thr-330. The interval Ala-340–Asn-360 is disordered. Ser-344 carries the post-translational modification Phosphoserine. Thr-346 and Thr-348 each carry phosphothreonine. Low complexity predominate over residues Leu-349–Asn-360.

Ubiquitinated. Rapidly degraded by the proteasome; degradation may involve FBXW7-specific phosphorylated phosphodegron motifs. In terms of tissue distribution, ubiquitously expressed.

It is found in the cytoplasm. It localises to the nucleus. Functionally, plays a critical role in cell cycle progression. In Homo sapiens (Human), this protein is Proline-rich protein 11 (PRR11).